The chain runs to 365 residues: Alanine racemase (365 aa).

Lysine 36 (proton acceptor; specific for D-alanine) is an active-site residue. An N6-(pyridoxal phosphate)lysine modification is found at lysine 36. Arginine 132 is a substrate binding site. The active-site Proton acceptor; specific for L-alanine is tyrosine 257. Methionine 305 is a binding site for substrate.

This sequence belongs to the alanine racemase family. It depends on pyridoxal 5'-phosphate as a cofactor.

The catalysed reaction is L-alanine = D-alanine. Its pathway is amino-acid biosynthesis; D-alanine biosynthesis; D-alanine from L-alanine: step 1/1. Catalyzes the interconversion of L-alanine and D-alanine. May also act on other amino acids. This Xylella fastidiosa (strain Temecula1 / ATCC 700964) protein is Alanine racemase (alr).